We begin with the raw amino-acid sequence, 276 residues long: Octanoyltransferase LipM (276 aa).

Positions 32–247 constitute a BPL/LPL catalytic domain; it reads GEVAPTLRFY…GFEDALQLTF (216 aa). The Acyl-thioester intermediate role is filled by cysteine 149.

The protein belongs to the octanoyltransferase LipM family. As to quaternary structure, monomer.

The catalysed reaction is octanoyl-[ACP] + L-lysyl-[protein] = N(6)-octanoyl-L-lysyl-[protein] + holo-[ACP] + H(+). It functions in the pathway protein modification; protein lipoylation via endogenous pathway; protein N(6)-(lipoyl)lysine from octanoyl-[acyl-carrier-protein]. Functionally, catalyzes the transfer of endogenously produced octanoic acid from octanoyl-acyl-carrier-protein onto the lipoyl domain of GcvH, an intermediate carrier during protein lipoylation. The chain is Octanoyltransferase LipM from Exiguobacterium sibiricum (strain DSM 17290 / CCUG 55495 / CIP 109462 / JCM 13490 / 255-15).